Reading from the N-terminus, the 333-residue chain is Phosphate acyltransferase (333 aa).

The protein belongs to the PlsX family. As to quaternary structure, homodimer. Probably interacts with PlsY.

It is found in the cytoplasm. It catalyses the reaction a fatty acyl-[ACP] + phosphate = an acyl phosphate + holo-[ACP]. It functions in the pathway lipid metabolism; phospholipid metabolism. Functionally, catalyzes the reversible formation of acyl-phosphate (acyl-PO(4)) from acyl-[acyl-carrier-protein] (acyl-ACP). This enzyme utilizes acyl-ACP as fatty acyl donor, but not acyl-CoA. This Desulforamulus reducens (strain ATCC BAA-1160 / DSM 100696 / MI-1) (Desulfotomaculum reducens) protein is Phosphate acyltransferase.